The following is a 758-amino-acid chain: Translation initiation factor IF-2 (758 aa).

The tract at residues 55–168 is disordered; it reads EKNVGKQATQ…KTHQPSIPVK (114 aa). Polar residues-rich tracts occupy residues 60 to 78 and 86 to 95; these read KQATQNISQKSQSNGQQNH and QRQQSATSKP. Over residues 96–136 the composition is skewed to low complexity; sequence KVNNQQHSNSSNEKSKNTKGNQNRNMTQNNNNNNNNNNNNR. Positions 259–428 constitute a tr-type G domain; it reads ERPPVVTIMG…LLVAEVGELK (170 aa). Residues 268 to 275 are G1; it reads GHVDHGKT. 268–275 is a binding site for GTP; sequence GHVDHGKT. The interval 293–297 is G2; that stretch reads GITQH. Positions 314-317 are G3; it reads DTPG. GTP-binding positions include 314-318 and 368-371; these read DTPGH and NKMD. Positions 368–371 are G4; the sequence is NKMD. Residues 404–406 form a G5 region; that stretch reads SAL.

The protein belongs to the TRAFAC class translation factor GTPase superfamily. Classic translation factor GTPase family. IF-2 subfamily.

The protein localises to the cytoplasm. One of the essential components for the initiation of protein synthesis. Protects formylmethionyl-tRNA from spontaneous hydrolysis and promotes its binding to the 30S ribosomal subunits. Also involved in the hydrolysis of GTP during the formation of the 70S ribosomal complex. This chain is Translation initiation factor IF-2, found in Lysinibacillus sphaericus (strain C3-41).